Consider the following 237-residue polypeptide: Concanavalin V (237 aa).

Mn(2+)-binding residues include glutamate 8 and aspartate 10. The Ca(2+) site is built by aspartate 10, tyrosine 12, asparagine 14, and aspartate 19. Asparagine 14 serves as a coordination point for a carbohydrate. Aspartate 19 and histidine 24 together coordinate Mn(2+). A carbohydrate-binding positions include glycine 70, 98–100 (GLY), aspartate 208, and arginine 228.

This sequence belongs to the leguminous lectin family. Homotetramer. Post-translationally, concanavalin A-like lectins of the Diocleinae subtribe undergo proteolytic processing referred to as circular permutation. The propeptide is split into an N-terminal and a C-terminal part, the gamma and beta chain, respectively. These are then religated in beta-gamma order to form the mature alpha chain. The beta and gamma chains can often be detected in cell extracts. Residues 1-118 of the mature chain, as displayed here, probably constitute the beta chain in the propeptide, residues 119-237 the gamma chain.

Functionally, D-mannose/D-glucose-binding lectin which binds alpha-methyl-D-mannoside, D-mannose and D-glucose in that order. Also binds to serum fetuin and ovalbumin. Has hemagglutinating activity towards rabbit erythrocytes. Is not toxic towards larvae of the brine shrimp Artemia. Induces relaxation in rat endothelized aorta. Shows a transient edematogenic effect in rat. The sequence is that of Concanavalin V from Canavalia cathartica (Jackbean).